Here is a 67-residue protein sequence, read N- to C-terminus: Large ribosomal subunit protein uL30 (67 aa).

The protein belongs to the universal ribosomal protein uL30 family. In terms of assembly, part of the 50S ribosomal subunit.

The sequence is that of Large ribosomal subunit protein uL30 from Sorangium cellulosum (strain So ce56) (Polyangium cellulosum (strain So ce56)).